Reading from the N-terminus, the 355-residue chain is Guanine nucleotide-binding protein G(i) subunit alpha-2 (355 aa).

G2 is lipidated: N-myristoyl glycine. C3 is lipidated: S-palmitoyl cysteine. The 324-residue stretch at R32–F355 folds into the G-alpha domain. Positions K35–T48 are G1 motif. Residues G40–S47, L176–T182, D201–Q205, N270–D273, and A327 contribute to the GTP site. S47 and T182 together coordinate Mg(2+). The interval D174–T182 is G2 motif. The G3 motif stretch occupies residues F197–R206. The interval I266–D273 is G4 motif. The tract at residues T325–T330 is G5 motif.

This sequence belongs to the G-alpha family. G(i/o/t/z) subfamily. G proteins are composed of 3 units; alpha, beta and gamma. The alpha chain contains the guanine nucleotide binding site. In this context, interacts with GNB2. Interacts with UNC5B. Interacts with GPSM1. Interacts with RGS12 and RGS14. Interacts (inactive GDP-bound form) with NUCB1 (via GBA motif); the interaction leads to activation of GNAI3. Interacts (inactive GDP-bound form) with CCDC88C/DAPLE (via GBA motif). Interacts (inactive GDP-bound form) with CCDC8A/GIV (via GBA motif). In terms of tissue distribution, ubiquitously expressed. Most abundant in the lung and in the spleen.

The protein localises to the cytoplasm. It localises to the cytoskeleton. It is found in the microtubule organizing center. Its subcellular location is the centrosome. The protein resides in the cell membrane. The protein localises to the membrane. Functionally, guanine nucleotide-binding proteins (G proteins) are involved as modulators or transducers in various transmembrane signaling systems. The G(i) proteins are involved in hormonal regulation of adenylate cyclase: they inhibit the cyclase in response to beta-adrenergic stimuli. May play a role in cell division. This Cavia porcellus (Guinea pig) protein is Guanine nucleotide-binding protein G(i) subunit alpha-2 (GNAI2).